An 883-amino-acid polypeptide reads, in one-letter code: Valine--tRNA ligase (883 aa).

Residues 50–60 carry the 'HIGH' region motif; sequence PNVTGKLHMGH. A 'KMSKS' region motif is present at residues 527–531; the sequence is KMSKS. An ATP-binding site is contributed by lysine 530. Positions 811–883 form a coiled coil; it reads LNELIDLDEE…KQRLEQLQRA (73 aa). The segment at 859-883 is disordered; it reads QRTKRSDFEDQLTSTKQRLEQLQRA.

It belongs to the class-I aminoacyl-tRNA synthetase family. ValS type 1 subfamily. In terms of assembly, monomer.

The protein localises to the cytoplasm. The enzyme catalyses tRNA(Val) + L-valine + ATP = L-valyl-tRNA(Val) + AMP + diphosphate. In terms of biological role, catalyzes the attachment of valine to tRNA(Val). As ValRS can inadvertently accommodate and process structurally similar amino acids such as threonine, to avoid such errors, it has a 'posttransfer' editing activity that hydrolyzes mischarged Thr-tRNA(Val) in a tRNA-dependent manner. In Lacticaseibacillus casei (Lactobacillus casei), this protein is Valine--tRNA ligase.